Reading from the N-terminus, the 1015-residue chain is DNA ligase 3 (1015 aa).

Residues 94–186 (FCVDYAKRGT…QISQHIADLS (93 aa)) form a PARP-type zinc finger. Residues C106, C109, H140, and C143 each contribute to the Zn(2+) site. 4 positions are modified to phosphoserine: S211, S217, S228, and S244. The interval 229 to 255 (GFSAAKPNNSEQAPSSPAPGTSLSASK) is disordered. The span at 234 to 253 (KPNNSEQAPSSPAPGTSLSA) shows a compositional bias: polar residues. Interaction with DNA regions lie at residues 279–282 (PSYN), 323–328 (VYNLND), 393–396 (TKED), and 426–432 (KMNSGAK). Residue E511 participates in ATP binding. Catalysis depends on K513, which acts as the N6-AMP-lysine intermediate. 2 residues coordinate ATP: R518 and R533. Positions 565 and 660 each coordinate Mg(2+). The ATP site is built by K665, R676, and K680. Positions 849–926 (DEASPTTGGS…KSSPVKVGMK (78 aa)) are disordered. Positions 854–884 (TTGGSSGENEGTAGSAGPCKGPPSKSSASAK) are enriched in low complexity. S919 bears the Phosphoserine mark. One can recognise a BRCT domain in the interval 939 to 1015 (VLLDVFTGVR…IRKRRLIAPC (77 aa)).

This sequence belongs to the ATP-dependent DNA ligase family. In terms of assembly, isoform 3 interacts (via BRCT domain) with the nuclear DNA-repair protein XRCC1. Interacts with POLG. Interacts with POLB. Requires Mg(2+) as cofactor. As to expression, the alpha isoform is expressed in all tissues, while the beta isoform is expressed only in the testis.

It is found in the nucleus. The enzyme catalyses ATP + (deoxyribonucleotide)n-3'-hydroxyl + 5'-phospho-(deoxyribonucleotide)m = (deoxyribonucleotide)n+m + AMP + diphosphate.. The alpha isoform interacts with DNA-repair protein XRCC1 and can correct defective DNA strand-break repair and sister chromatid exchange following treatment with ionizing radiation and alkylating agents. The beta isoform does not interact with XRCC1 and may be specifically involved in the completion of homologous recombination events that occur during meiotic prophase. This chain is DNA ligase 3 (Lig3), found in Mus musculus (Mouse).